We begin with the raw amino-acid sequence, 324 residues long: Olfactory receptor 5A2 (324 aa).

At 1-26 (MAVGRNNTIVTKFILLGLSDHPQMKI) the chain is on the extracellular side. Asparagine 6 carries N-linked (GlcNAc...) asparagine glycosylation. Residues 27–47 (FLFMLFLGLYLLTLAWNLSLI) traverse the membrane as a helical segment. Residues 48–55 (ALIKMDSH) lie on the Cytoplasmic side of the membrane. The helical transmembrane segment at 56 to 76 (LHMPMYFFLSNLSFLDICYVS) threads the bilayer. The Extracellular segment spans residues 77–100 (STAPKMLSDIITEQKTISFVGCAT). Cysteine 98 and cysteine 190 are joined by a disulfide. A helical transmembrane segment spans residues 101–121 (QYFVFCGMGLTECFLLAAMAY). Residues 122-134 (DRYAAICNPLLYT) are Cytoplasmic-facing. A helical membrane pass occupies residues 135 to 155 (VLISHTLCLKMVVGAYVGGFL). Topologically, residues 156–197 (SSFIETYSVYQHDFCGPYMINHFFCDLPPVLALSCSDTFTSE) are extracellular. Residues 198–218 (VVTFIVSVVVGIVSVLVVLIS) form a helical membrane-spanning segment. Over 219 to 238 (YGYIVAAVVKISSATGRTKA) the chain is Cytoplasmic. The helical transmembrane segment at 239–259 (FSTCASHLTAVTLFYGSGFFM) threads the bilayer. At 260 to 272 (YMRPSSSYSLNRD) the chain is on the extracellular side. Residues 273 to 293 (KVVSIFYALVIPVVNPIIYSF) traverse the membrane as a helical segment. At 294–324 (RNKEIKNAMRKAMERDPGISHGGPFIFMTLG) the chain is on the cytoplasmic side.

This sequence belongs to the G-protein coupled receptor 1 family.

It localises to the cell membrane. Odorant receptor. This Homo sapiens (Human) protein is Olfactory receptor 5A2 (OR5A2).